The following is a 120-amino-acid chain: NAD(P)H-quinone oxidoreductase subunit 3 (120 aa).

3 helical membrane passes run 1 to 21 (MFVLSGYEYLLGFFIICSLVP), 64 to 84 (MFALVFVVFDVETVFLYPWAV), and 89 to 109 (LGLLAFIEALVFIAILVVALV).

This sequence belongs to the complex I subunit 3 family. As to quaternary structure, NDH-1 can be composed of about 15 different subunits; different subcomplexes with different compositions have been identified which probably have different functions.

It is found in the cellular thylakoid membrane. It catalyses the reaction a plastoquinone + NADH + (n+1) H(+)(in) = a plastoquinol + NAD(+) + n H(+)(out). The enzyme catalyses a plastoquinone + NADPH + (n+1) H(+)(in) = a plastoquinol + NADP(+) + n H(+)(out). Its function is as follows. NDH-1 shuttles electrons from an unknown electron donor, via FMN and iron-sulfur (Fe-S) centers, to quinones in the respiratory and/or the photosynthetic chain. The immediate electron acceptor for the enzyme in this species is believed to be plastoquinone. Couples the redox reaction to proton translocation, and thus conserves the redox energy in a proton gradient. Cyanobacterial NDH-1 also plays a role in inorganic carbon-concentration. The protein is NAD(P)H-quinone oxidoreductase subunit 3 of Nostoc punctiforme (strain ATCC 29133 / PCC 73102).